The following is a 290-amino-acid chain: Appressorium protein ROW2 (290 aa).

Positions 1-19 (MFTKSVFIALVAGVLGVTA) are cleaved as a signal peptide. Residues 266–290 (AIKTPSKRSVMATHVKRSPEWEEEP) form a disordered region.

Its subcellular location is the secreted. The protein localises to the nucleus. Functionally, plays a role in the formation of the appressorium, a specialized infection structure with the purpose of penetrating the host surface, and is required for proper remodeling of the appressorium wall and vesicle secretion. The sequence is that of Appressorium protein ROW2 from Mycosarcoma maydis (Corn smut fungus).